Here is a 248-residue protein sequence, read N- to C-terminus: N-acylneuraminate-9-phosphatase (248 aa).

Asp-12 contacts Mg(2+). Leu-13, Asp-14, Thr-131, Asn-132, and Lys-164 together coordinate phosphate. Asp-14 contacts Mg(2+). Position 189 (Asp-189) interacts with Mg(2+).

This sequence belongs to the HAD-like hydrolase superfamily. NANP family. The cofactor is Mg(2+).

It carries out the reaction N-acetylneuraminate 9-phosphate + H2O = N-acetylneuraminate + phosphate. The enzyme catalyses N-glycoloylneuraminate 9-phosphate + H2O = N-glycoloylneuraminate + phosphate. It participates in amino-sugar metabolism; N-acetylneuraminate biosynthesis. Its activity is regulated as follows. Inhibited by calcium. Inhibited by vanadate, sodium orthovanate and phosphonate. Catalyzes the dephosphorylation of N-acylneuraminate 9-phosphate (Neu5Ac-9-P) to sialic acid N-acetylneuraminic acid (Neu5Ac). May also use N-glycoloylneuraminate 9-phosphate as substrate. This is N-acylneuraminate-9-phosphatase from Mus musculus (Mouse).